An 84-amino-acid chain; its full sequence is Small ribosomal subunit protein uS17 (84 aa).

The protein belongs to the universal ribosomal protein uS17 family. As to quaternary structure, part of the 30S ribosomal subunit.

Functionally, one of the primary rRNA binding proteins, it binds specifically to the 5'-end of 16S ribosomal RNA. The protein is Small ribosomal subunit protein uS17 of Histophilus somni (strain 129Pt) (Haemophilus somnus).